Consider the following 197-residue polypeptide: uncharacterized protein (197 aa).

The protein belongs to the NAD(P)H dehydrogenase (quinone) family.

This is an uncharacterized protein from Bacillus subtilis (strain 168).